Consider the following 158-residue polypeptide: Histone H3-like centromeric protein CSE4 (158 aa).

Over residues Met-1–Leu-18 the composition is skewed to polar residues. Residues Met-1–Lys-59 form a disordered region. Positions Arg-20–Arg-29 are enriched in basic and acidic residues. The segment at Thr-54–Asn-157 is H3-like.

It belongs to the histone H3 family. In terms of assembly, component of centromeric nucleosomes, where DNA is wrapped around a histone octamer core. The octamer contains two molecules each of H2A, H2B, CSE4/CENPA and H4 assembled in one CSE4-H4 heterotetramer and two H2A-H2B heterodimers. Interacts with the inner kinetochore. Ubiquitinated. Is degraded through ubiquitin-mediated proteolysis when not protected by its association to the kinetochore.

It is found in the nucleus. The protein resides in the chromosome. The protein localises to the centromere. In terms of biological role, histone H3-like nucleosomal protein that is specifically found in centromeric nucleosomes. Replaces conventional H3 in the nucleosome core of centromeric chromatin that serves as an assembly site for the inner kinetochore. Required for recruitment and assembly of kinetochore proteins, mitotic progression and chromosome segregation. May serve as an epigenetic mark that propagates centromere identity through replication and cell division. In Millerozyma farinosa (Yeast), this protein is Histone H3-like centromeric protein CSE4 (CSE4).